Here is a 180-residue protein sequence, read N- to C-terminus: Large ribosomal subunit protein uL5 (180 aa).

The protein belongs to the universal ribosomal protein uL5 family. In terms of assembly, part of the 50S ribosomal subunit; part of the 5S rRNA/L5/L18/L25 subcomplex. Contacts the 5S rRNA and the P site tRNA. Forms a bridge to the 30S subunit in the 70S ribosome.

Its function is as follows. This is one of the proteins that bind and probably mediate the attachment of the 5S RNA into the large ribosomal subunit, where it forms part of the central protuberance. In the 70S ribosome it contacts protein S13 of the 30S subunit (bridge B1b), connecting the 2 subunits; this bridge is implicated in subunit movement. Contacts the P site tRNA; the 5S rRNA and some of its associated proteins might help stabilize positioning of ribosome-bound tRNAs. The sequence is that of Large ribosomal subunit protein uL5 from Polynucleobacter asymbioticus (strain DSM 18221 / CIP 109841 / QLW-P1DMWA-1) (Polynucleobacter necessarius subsp. asymbioticus).